The chain runs to 565 residues: Periplasmic trehalase (565 aa).

A signal peptide spans 1–30 (MKSPAPSRPQKMALIPACIFLCFAALSVQA). Substrate-binding positions include Arg-152, 159–160 (WD), Asn-196, 205–207 (RSQ), 277–279 (RPE), and Gly-310. Active-site proton donor/acceptor residues include Asp-312 and Glu-496. A substrate-binding site is contributed by Glu-511. Positions 539-565 (CDNVPATRPLSESTTQPLKQKEAEPTP) are disordered.

The protein belongs to the glycosyl hydrolase 37 family. As to quaternary structure, monomer.

The protein localises to the periplasm. It catalyses the reaction alpha,alpha-trehalose + H2O = alpha-D-glucose + beta-D-glucose. In terms of biological role, provides the cells with the ability to utilize trehalose at high osmolarity by splitting it into glucose molecules that can subsequently be taken up by the phosphotransferase-mediated uptake system. The sequence is that of Periplasmic trehalase from Escherichia coli O1:K1 / APEC.